Here is a 330-residue protein sequence, read N- to C-terminus: Dimethyladenosine transferase 1, mitochondrial (330 aa).

The transit peptide at 1–84 (MAQPSARVLQ…RSILRRHPQR (84 aa)) directs the protein to the mitochondrion. S-adenosyl-L-methionine-binding positions include 38–41 (QNFL), Asn-39, Leu-41, Gly-67, Glu-89, Asp-118, and Asn-140.

Belongs to the class I-like SAM-binding methyltransferase superfamily. rRNA adenine N(6)-methyltransferase family. KsgA subfamily.

The protein localises to the mitochondrion. In terms of biological role, probable S-adenosyl-L-methionine-dependent methyltransferase which specifically dimethylates mitochondrial 12S rRNA at the conserved stem loop. In contrast to mtTFB2, it does not have a critical role in either transcription or regulation of the copy number of mitochondrial DNA. This chain is Dimethyladenosine transferase 1, mitochondrial (mtTFB1), found in Drosophila melanogaster (Fruit fly).